The primary structure comprises 219 residues: Thymidylate kinase (219 aa).

9 to 16 (GIEGSGKT) is a binding site for ATP.

It belongs to the thymidylate kinase family.

It catalyses the reaction dTMP + ATP = dTDP + ADP. Its function is as follows. Phosphorylation of dTMP to form dTDP in both de novo and salvage pathways of dTTP synthesis. The protein is Thymidylate kinase of Pelobacter propionicus (strain DSM 2379 / NBRC 103807 / OttBd1).